The chain runs to 411 residues: 1-deoxy-D-xylulose 5-phosphate reductoisomerase (411 aa).

NADPH-binding residues include Thr12, Gly13, Ser14, Ile15, and Asn127. Lys128 lines the 1-deoxy-D-xylulose 5-phosphate pocket. Glu129 is a binding site for NADPH. Residue Asp153 coordinates Mn(2+). Residues Ser154, Glu155, Ser189, and His212 each coordinate 1-deoxy-D-xylulose 5-phosphate. Glu155 is a Mn(2+) binding site. Gly218 is an NADPH binding site. Ser225, Asn230, Lys231, and Glu234 together coordinate 1-deoxy-D-xylulose 5-phosphate. Glu234 serves as a coordination point for Mn(2+).

The protein belongs to the DXR family. The cofactor is Mg(2+). Requires Mn(2+) as cofactor.

It catalyses the reaction 2-C-methyl-D-erythritol 4-phosphate + NADP(+) = 1-deoxy-D-xylulose 5-phosphate + NADPH + H(+). It functions in the pathway isoprenoid biosynthesis; isopentenyl diphosphate biosynthesis via DXP pathway; isopentenyl diphosphate from 1-deoxy-D-xylulose 5-phosphate: step 1/6. Catalyzes the NADPH-dependent rearrangement and reduction of 1-deoxy-D-xylulose-5-phosphate (DXP) to 2-C-methyl-D-erythritol 4-phosphate (MEP). The chain is 1-deoxy-D-xylulose 5-phosphate reductoisomerase from Colwellia psychrerythraea (strain 34H / ATCC BAA-681) (Vibrio psychroerythus).